The chain runs to 430 residues: F-box protein At1g49990 (430 aa).

The 45-residue stretch at 1–45 folds into the F-box domain; that stretch reads METGRRRTIPEVEILARLPLRSIARFKSVCKRWKSVIESDYFRRL.

The chain is F-box protein At1g49990 from Arabidopsis thaliana (Mouse-ear cress).